Consider the following 1178-residue polypeptide: Tricalbin-2 (1178 aa).

The span at 1-17 shows a compositional bias: polar residues; it reads MSPNSSKTRTDQISSMP. A disordered region spans residues 1–27; it reads MSPNSSKTRTDQISSMPGINEATKVES. Topologically, residues 1 to 98 are cytoplasmic; the sequence is MSPNSSKTRT…NLLPDKFYGD (98 aa). The chain crosses the membrane as a helical span at residues 99-119; that stretch reads WYHEVAILIIAGLCSFVLGYF. Residue Lys-120 is a topological domain, extracellular. The helical transmembrane segment at 121–141 threads the bilayer; sequence FSLASVLIVMLTTGMLYRTSS. Over 142 to 1178 the chain is Cytoplasmic; the sequence is KKYRESLRDL…TGDKKSEEKQ (1037 aa). An SMP-LTD domain is found at 164–367; sequence DYESVEWLNT…PPFSLQLNIP (204 aa). 3 consecutive C2 domains span residues 358 to 481, 504 to 628, and 632 to 749; these read PPFS…EKVH, PKKL…LKVT, and RPVD…DKYT. A coiled-coil region spans residues 784-821; the sequence is LSLEEAKEVDEINEKKDKLEKQKSTLDDKNISKEEKER. In terms of domain architecture, C2 4 spans 962-1086; it reads QVSWFPVTAT…DPESDTTFNI (125 aa). Ser-991 carries the post-translational modification Phosphoserine.

This sequence belongs to the tricalbin family. In terms of assembly, interacts with TCB1 and TCB3 via its C-terminal domain.

It localises to the cell membrane. Its subcellular location is the endoplasmic reticulum membrane. In terms of biological role, may play a role in membrane trafficking. This chain is Tricalbin-2 (TCB2), found in Saccharomyces cerevisiae (strain ATCC 204508 / S288c) (Baker's yeast).